The following is a 282-amino-acid chain: Endochitinase 4 (282 aa).

Positions 1–282 constitute a GH18 domain; that stretch reads GAKNGVHPPL…TWSINWDGSK (282 aa). The active-site Proton donor is Glu-112. N-linked (GlcNAc...) asparagine glycosylation is present at Asn-265.

Belongs to the glycosyl hydrolase 18 family. Chitinase class V subfamily.

Its subcellular location is the secreted. The catalysed reaction is Random endo-hydrolysis of N-acetyl-beta-D-glucosaminide (1-&gt;4)-beta-linkages in chitin and chitodextrins.. Secreted chitinase involved in the degradation of chitin, a component of the cell walls of fungi and exoskeletal elements of some animals (including worms and arthropods). Participates in the infection process and directly acts in the penetration process of the host cuticle. The chain is Endochitinase 4 (chi4) from Metarhizium anisopliae (Entomophthora anisopliae).